Here is a 222-residue protein sequence, read N- to C-terminus: Superoxide dismutase [Mn], mitochondrial (222 aa).

The N-terminal 24 residues, 1-24, are a transit peptide targeting the mitochondrion; the sequence is MLSRAVCGTGRQLAPALGYLGSRQ. A Mn(2+)-binding site is contributed by His-50. Position 58 is a 3'-nitrotyrosine (Tyr-58). Residues Lys-68 and Lys-75 each carry the N6-acetyllysine; alternate modification. N6-succinyllysine; alternate occurs at positions 68 and 75. His-98 is a binding site for Mn(2+). Lys-114 is modified (N6-acetyllysine). N6-acetyllysine; alternate occurs at positions 122 and 130. 2 positions are modified to N6-succinyllysine; alternate: Lys-122 and Lys-130. Asp-183 and His-187 together coordinate Mn(2+). N6-acetyllysine is present on Lys-202.

The protein belongs to the iron/manganese superoxide dismutase family. Homotetramer. Mn(2+) is required as a cofactor. Nitrated under oxidative stress. Nitration coupled with oxidation inhibits the catalytic activity. In terms of processing, acetylation at Lys-122 decreases enzymatic activity. Deacetylated by SIRT3 upon exposure to ionizing radiations or after long fasting. Post-translationally, polyubiquitinated; leading to proteasomal degradation. Deubiquitinated by USP36 which increases protein stability.

Its subcellular location is the mitochondrion matrix. It carries out the reaction 2 superoxide + 2 H(+) = H2O2 + O2. Its function is as follows. Destroys superoxide anion radicals which are normally produced within the cells and which are toxic to biological systems. The polypeptide is Superoxide dismutase [Mn], mitochondrial (SOD2) (Macaca nemestrina (Pig-tailed macaque)).